The sequence spans 1257 residues: Phosphatidylinositol 3,4,5-trisphosphate 5-phosphatase 2 (1257 aa).

The SH2 domain occupies 21–117; the sequence is WYHRDLSRAA…GLVCALLLPV (97 aa). Residues 119–132 show a composition bias toward basic and acidic residues; sequence GEREPDPPDDRDAS. A disordered region spans residues 119–181; that stretch reads GEREPDPPDD…ESTPNGLSTV (63 aa). The residue at position 132 (Ser-132) is a Phosphoserine. The segment covering 156–166 has biased composition (pro residues); sequence PSSPLPAPETP. Thr-165 is subject to Phosphothreonine. Phosphoserine is present on residues Ser-241 and Ser-353. Tyr-887 carries the phosphotyrosine modification. Phosphoserine is present on Ser-891. The segment at 897–986 is disordered; sequence TGAKSKAPSV…PPKNSFNNPA (90 aa). The span at 939 to 951 shows a compositional bias: pro residues; it reads PPPTGRPPAPPRA. Residues 945–950 carry the SH3-binding motif; sequence PPAPPR. Positions 952 to 966 are enriched in basic and acidic residues; it reads VPREESLNPRLKSEG. The NPXY motif signature appears at 984–987; sequence NPAY. Position 987 is a phosphotyrosine (Tyr-987). The tract at residues 1004–1115 is disordered; the sequence is SFARAPIPPT…PASTFLEEVA (112 aa). Pro residues-rich tracts occupy residues 1049–1060 and 1088–1104; these read LPPPDFPPPPLP and GPPP…PPGT. Phosphoserine is present on Ser-1132. Phosphotyrosine occurs at positions 1136 and 1161. One can recognise an SAM domain in the interval 1195-1257; the sequence is LGEAGMGAWL…LLLDTLQLSK (63 aa). The residue at position 1256 (Ser-1256) is a Phosphoserine.

The protein belongs to the inositol 1,4,5-trisphosphate 5-phosphatase family. Interacts with tyrosine phosphorylated form of SHC1. Interacts with EGFR. Upon stimulation by the EGF signaling pathway, it forms a complex with SHC1 and EGFR. Interacts with cytoskeletal protein SORBS3/vinexin, promoting its localization to the periphery of cells. Forms a complex with filamin (FLNA or FLNB), actin, GPIb (GP1BA or GP1BB) that regulates cortical and submembraneous actin. Interacts with c-Met/MET, when c-Met/MET is phosphorylated on 'Tyr-1356'. Interacts with p130Cas/BCAR1. Interacts with CENTD3/ARAP3 via its SAM domain. Interacts with c-Cbl/CBL and CAP/SORBS1. Interacts with activated EPHA2 receptor. Interacts with receptors FCGR2A. Interacts with FCGR2B. Interacts with tyrosine kinase ABL1. Interacts with tyrosine kinase TEC. Interacts with CSF1R. Interacts (via N-terminus) with SH3YL1 (via SH3 domain). Interacts (via SH2 domain) with tyrosine phosphorylated KLRC1 (via ITIM). Interacts with NEDD9/HEF1. Tyrosine phosphorylated by the members of the SRC family after exposure to a diverse array of extracellular stimuli such as insulin, growth factors such as EGF or PDGF, chemokines, integrin ligands and hypertonic and oxidative stress. May be phosphorylated upon IgG receptor FCGR2B-binding. Phosphorylated at Tyr-987 following cell attachment and spreading. Phosphorylated at Tyr-1161 following EGF signaling pathway stimulation.

The protein localises to the cytoplasm. Its subcellular location is the cytosol. It localises to the cytoskeleton. It is found in the membrane. The protein resides in the cell projection. The protein localises to the filopodium. Its subcellular location is the lamellipodium. It localises to the basal cell membrane. It is found in the nucleus. The protein resides in the nucleus speckle. The protein localises to the spindle pole. It catalyses the reaction a 1,2-diacyl-sn-glycero-3-phospho-(1D-myo-inositol-3,4,5-trisphosphate) + H2O = a 1,2-diacyl-sn-glycero-3-phospho-(1D-myo-inositol-3,4-bisphosphate) + phosphate. The catalysed reaction is 1,2-dioctanoyl-sn-glycero-3-phospho-(1D-myo-inositol-3,4,5-trisphosphate) + H2O = 1,2-dioctanoyl-sn-glycero-3-phospho-(1D-myo-inositol-3,4-bisphosphate) + phosphate. It carries out the reaction 1,2-dihexadecanoyl-sn-glycero-3-phospho-(1D-myo-inositol-3,4,5-trisphosphate) + H2O = 1,2-dihexadecanoyl-sn-glycero-3-phospho-(1D-myo-inositol-3,4-bisphosphate) + phosphate. Its activity is regulated as follows. Activated upon translocation to the sites of synthesis of PtdIns(3,4,5)P3 in the membrane. Enzymatic activity is enhanced in the presence of phosphatidylserine. Functionally, phosphatidylinositol (PtdIns) phosphatase that specifically hydrolyzes the 5-phosphate of phosphatidylinositol-3,4,5-trisphosphate (PtdIns(3,4,5)P3) to produce PtdIns(3,4)P2, thereby negatively regulating the PI3K (phosphoinositide 3-kinase) pathways. Required for correct mitotic spindle orientation and therefore progression of mitosis. Plays a central role in regulation of PI3K-dependent insulin signaling, although the precise molecular mechanisms and signaling pathways remain unclear. While overexpression reduces both insulin-stimulated MAP kinase and Akt activation, its absence does not affect insulin signaling or GLUT4 trafficking. Confers resistance to dietary obesity. May act by regulating AKT2, but not AKT1, phosphorylation at the plasma membrane. Part of a signaling pathway that regulates actin cytoskeleton remodeling. Required for the maintenance and dynamic remodeling of actin structures as well as in endocytosis, having a major impact on ligand-induced EGFR internalization and degradation. Participates in regulation of cortical and submembraneous actin by hydrolyzing PtdIns(3,4,5)P3 thereby regulating membrane ruffling. Regulates cell adhesion and cell spreading. Required for HGF-mediated lamellipodium formation, cell scattering and spreading. Acts as a negative regulator of EPHA2 receptor endocytosis by inhibiting via PI3K-dependent Rac1 activation. Acts as a regulator of neuritogenesis by regulating PtdIns(3,4,5)P3 level and is required to form an initial protrusive pattern, and later, maintain proper neurite outgrowth. Acts as a negative regulator of the FC-gamma-RIIA receptor (FCGR2A). Mediates signaling from the FC-gamma-RIIB receptor (FCGR2B), playing a central role in terminating signal transduction from activating immune/hematopoietic cell receptor systems. Involved in EGF signaling pathway. Upon stimulation by EGF, it is recruited by EGFR and dephosphorylates PtdIns(3,4,5)P3. Plays a negative role in regulating the PI3K-PKB pathway, possibly by inhibiting PKB activity. Down-regulates Fc-gamma-R-mediated phagocytosis in macrophages independently of INPP5D/SHIP1. In macrophages, down-regulates NF-kappa-B-dependent gene transcription by regulating macrophage colony-stimulating factor (M-CSF)-induced signaling. Plays a role in the localization of AURKA and NEDD9/HEF1 to the basolateral membrane at interphase in polarized cysts, thereby mediates cell cycle homeostasis, cell polarization and cilia assembly. Additionally promotion of cilia growth is also facilitated by hydrolysis of (PtdIns(3,4,5)P3) to PtdIns(3,4)P2. Promotes formation of apical membrane-initiation sites during the initial stages of lumen formation via Rho family-induced actin filament organization and CTNNB1 localization to cell-cell contacts. May also hydrolyze PtdIns(1,3,4,5)P4, and could thus affect the levels of the higher inositol polyphosphates like InsP6. Involved in endochondral ossification. The polypeptide is Phosphatidylinositol 3,4,5-trisphosphate 5-phosphatase 2 (Rattus norvegicus (Rat)).